Consider the following 167-residue polypeptide: Small ribosomal subunit protein uS5 (167 aa).

The S5 DRBM domain occupies 11-74 (LQEKLIAVNR…DKARRNMTTI (64 aa)).

It belongs to the universal ribosomal protein uS5 family. In terms of assembly, part of the 30S ribosomal subunit. Contacts proteins S4 and S8.

Functionally, with S4 and S12 plays an important role in translational accuracy. Located at the back of the 30S subunit body where it stabilizes the conformation of the head with respect to the body. This Baumannia cicadellinicola subsp. Homalodisca coagulata protein is Small ribosomal subunit protein uS5.